The following is a 605-amino-acid chain: MSSSLFILDENLEPLVSKNIRALPNLSSVLSSFKQCYHDGSPPILSQNDWFFIHLKRDFLHFVSVIHTTDKPNIDLMTILAFLEQFYHLLQKYFEIEVLTKNVILDNILLVLELIDECIDFGIVQVTDPSIIKDYIRVKVNVPRVTVDNEEWSPGEESSSSSGSDSDSEYSNTNKRKDKKKKRKKKKGTKGKSVGKSKLKSIMVNNKENRGINVVETVKETLRNKNDTGKEAANDELPNDGNDLYINGDIAKTIIMPISWRTKGIHYAKNEFFLDVIERVQYLMDFEKGVIRKNLIHGEIVCRCYLSGMPKLKISINKILNRDPQFMSNSSFHQCVSLDSINTIEKDEEKNSDDDAGLQAATDAREIEFIPPDGEFVLCQYELKRHVKDAPMVRLKDFEIKPKLKKFKIQIVTKIQTNFKPTNSTSKLNVRIPLTKVFQEYKIDLSKQIRFKANIGKVVFNLSDDFLLWEIQTMKGHREHSTNKSSQYNSDEDDPNTCASMVAEFPLFNQEEYDRLQEEMKTSMNPPPLRTGPRLEELYRQVHDQQTSHVTPRDKLVNIDFEIPYCTCSGLKVEYLKVEEPQLQYQSFPWVRYKTVSDEEYAYIV.

Residues 150–196 are disordered; it reads EEWSPGEESSSSSGSDSDSEYSNTNKRKDKKKKRKKKKGTKGKSVGK. Residues 155 to 171 are compositionally biased toward low complexity; the sequence is GEESSSSSGSDSDSEYS. Residues 174–196 show a composition bias toward basic residues; it reads NKRKDKKKKRKKKKGTKGKSVGK. Residues 269 to 604 enclose the MHD domain; sequence KNEFFLDVIE…TVSDEEYAYI (336 aa).

The protein belongs to the adaptor complexes medium subunit family. Component of the AP-1R complex composed of at least APM2, APL4 and APS1. Interacts with MIL1. Interacts with APL2.

It localises to the golgi apparatus membrane. It is found in the early endosome membrane. Its subcellular location is the cytoplasmic vesicle. The protein localises to the clathrin-coated vesicle membrane. Functionally, component of the AP-1-related (AP-1R) complex, an adapter protein complex that mediates of cargo protein sorting in clathrin-coated vesicles. AP-1R has a specific role in SNARE SNC1 sorting. In contrast to the APM1-containing AP-1 complex, AP-1R is incapable of sorting CHS3. The chain is Adaptin medium chain homolog APM2 (APM2) from Saccharomyces cerevisiae (strain ATCC 204508 / S288c) (Baker's yeast).